Here is a 65-residue protein sequence, read N- to C-terminus: DNA-directed RNA polymerase subunit Rpo10 (65 aa).

Zn(2+) is bound by residues C7, C10, C44, and C45.

Belongs to the archaeal Rpo10/eukaryotic RPB10 RNA polymerase subunit family. As to quaternary structure, part of the RNA polymerase complex. It depends on Zn(2+) as a cofactor.

Its subcellular location is the cytoplasm. The protein resides in the chromosome. It carries out the reaction RNA(n) + a ribonucleoside 5'-triphosphate = RNA(n+1) + diphosphate. Functionally, DNA-dependent RNA polymerase (RNAP) catalyzes the transcription of DNA into RNA using the four ribonucleoside triphosphates as substrates. The chain is DNA-directed RNA polymerase subunit Rpo10 from Thermococcus kodakarensis (strain ATCC BAA-918 / JCM 12380 / KOD1) (Pyrococcus kodakaraensis (strain KOD1)).